Consider the following 1020-residue polypeptide: LLGL scribble cell polarity complex component 2 (1020 aa).

WD repeat units follow at residues 36–69, 76–117, 132–169, 193–227, 233–264, 282–324, 332–364, 386–462, 506–581, 590–651, 710–766, 775–827, 832–884, and 898–921; these read SALGFSPSLELLAIGTRSGAIKLYGAPGVEFMGL, VTQV…IGRF, VTAVLAHSSGELLLLGTEGGHVFVVEVPGFRELEENNI, TLHENPLNPRQVLIGYSRGLMVLWDLDRQRPVQHF, LESVWWMEDGESILSSHSDGSYCQWTVTGEDP, AISK…KTHE, IIDFFVIREGENHKGEPSALVVLVEEELVVVDL, TCSH…YKLS, QKIH…FALV, TAIA…LRQS, VRTL…KEIQ, GLVV…VSSK, LTAV…VHYP, and VFTKYGQGFYLISPSEFERFSLST. The disordered stretch occupies residues 935–968; sequence LQMRSKSPSSPVHRDLPDGVPTEHRNFKGDSEGY. Residues 946-965 are compositionally biased toward basic and acidic residues; that stretch reads VHRDLPDGVPTEHRNFKGDS.

It belongs to the WD repeat L(2)GL family. Phosphorylated.

It is found in the cytoplasm. Its subcellular location is the cytoskeleton. Functionally, essential for hemidesmosome formation and maintenance of the cytoskeleton elements as well as cellular morphology in the basal epidermis during development. Also involved in regulating growth of the basal epidermis. The polypeptide is LLGL scribble cell polarity complex component 2 (llgl2) (Danio rerio (Zebrafish)).